A 238-amino-acid chain; its full sequence is Phosphoribosylaminoimidazole-succinocarboxamide synthase (238 aa).

It belongs to the SAICAR synthetase family.

It catalyses the reaction 5-amino-1-(5-phospho-D-ribosyl)imidazole-4-carboxylate + L-aspartate + ATP = (2S)-2-[5-amino-1-(5-phospho-beta-D-ribosyl)imidazole-4-carboxamido]succinate + ADP + phosphate + 2 H(+). It participates in purine metabolism; IMP biosynthesis via de novo pathway; 5-amino-1-(5-phospho-D-ribosyl)imidazole-4-carboxamide from 5-amino-1-(5-phospho-D-ribosyl)imidazole-4-carboxylate: step 1/2. This chain is Phosphoribosylaminoimidazole-succinocarboxamide synthase, found in Chlorobium phaeovibrioides (strain DSM 265 / 1930) (Prosthecochloris vibrioformis (strain DSM 265)).